The sequence spans 163 residues: Small ribosomal subunit protein bS18c (163 aa).

Disordered stretches follow at residues 1–52 (MYIS…IGPG) and 144–163 (NLRNSNQNLRNNNRNLSSDC). A compositionally biased stretch (basic residues) spans 7-48 (PFRKSKQPFRKSKQPFHKSKQPFRKFKQPFRKSKQPFRRRSR).

Belongs to the bacterial ribosomal protein bS18 family. As to quaternary structure, part of the 30S ribosomal subunit.

It is found in the plastid. It localises to the chloroplast. The protein is Small ribosomal subunit protein bS18c of Saccharum hybrid (Sugarcane).